Consider the following 557-residue polypeptide: NAD(P)H-quinone oxidoreductase chain 4 (557 aa).

14 helical membrane passes run 25–45, 57–77, 111–131, 133–153, 157–177, 189–209, 230–250, 264–284, 298–318, 327–347, 353–373, 397–417, 438–458, and 485–505; these read FPWL…VPFI, YALF…LKGF, LILL…PVSF, PKLF…VFAV, LLFF…LAIW, FIIY…AMGF, GFQL…LPIV, TAPV…YALL, FAPL…LTSF, IAYS…SFST, AMLQ…LVGA, FALW…SGFV, IVIA…LLSM, and IYII…PRIM.

Belongs to the complex I subunit 4 family.

Its subcellular location is the cellular thylakoid membrane. The catalysed reaction is a plastoquinone + NADH + (n+1) H(+)(in) = a plastoquinol + NAD(+) + n H(+)(out). It carries out the reaction a plastoquinone + NADPH + (n+1) H(+)(in) = a plastoquinol + NADP(+) + n H(+)(out). NDH-1 shuttles electrons from NAD(P)H, via FMN and iron-sulfur (Fe-S) centers, to quinones in the respiratory chain. The immediate electron acceptor for the enzyme in this species is believed to be plastoquinone. Couples the redox reaction to proton translocation (for every two electrons transferred, four hydrogen ions are translocated across the cytoplasmic membrane), and thus conserves the redox energy in a proton gradient. This Prochlorococcus marinus (strain SARG / CCMP1375 / SS120) protein is NAD(P)H-quinone oxidoreductase chain 4.